A 290-amino-acid polypeptide reads, in one-letter code: Signal recognition particle receptor subunit beta (290 aa).

The chain crosses the membrane as a helical span at residues 44 to 64 (VLLLALFTLIFIIIISKLFGS). GTP is bound by residues 92 to 100 (GLSNAGKTA), 114 to 117 (THTS), Gly140, and Ala268.

Belongs to the SRP receptor beta subunit family. As to quaternary structure, heterodimer of an alpha and a beta chain.

The protein resides in the endoplasmic reticulum membrane. Functionally, component of the signal recognition particle (SRP) complex receptor (SR). Ensures, in conjunction with the SRP complex, the correct targeting of the nascent secretory proteins to the endoplasmic reticulum membrane system. May mediate the membrane association of SR. The polypeptide is Signal recognition particle receptor subunit beta (srprb) (Dictyostelium discoideum (Social amoeba)).